We begin with the raw amino-acid sequence, 671 residues long: DNA ligase (671 aa).

Residues 32-36 (DAEYD), 81-82 (SL), and glutamate 113 contribute to the NAD(+) site. Catalysis depends on lysine 115, which acts as the N6-AMP-lysine intermediate. Residues arginine 136, glutamate 173, lysine 290, and lysine 314 each contribute to the NAD(+) site. Zn(2+) contacts are provided by cysteine 408, cysteine 411, cysteine 426, and cysteine 432. One can recognise a BRCT domain in the interval 593–671 (EIDSPFAGKT…ETEMLRLLGS (79 aa)).

The protein belongs to the NAD-dependent DNA ligase family. LigA subfamily. The cofactor is Mg(2+). It depends on Mn(2+) as a cofactor.

The enzyme catalyses NAD(+) + (deoxyribonucleotide)n-3'-hydroxyl + 5'-phospho-(deoxyribonucleotide)m = (deoxyribonucleotide)n+m + AMP + beta-nicotinamide D-nucleotide.. Functionally, DNA ligase that catalyzes the formation of phosphodiester linkages between 5'-phosphoryl and 3'-hydroxyl groups in double-stranded DNA using NAD as a coenzyme and as the energy source for the reaction. It is essential for DNA replication and repair of damaged DNA. In Escherichia coli O127:H6 (strain E2348/69 / EPEC), this protein is DNA ligase.